A 348-amino-acid chain; its full sequence is Nicotinate-nucleotide--dimethylbenzimidazole phosphoribosyltransferase (348 aa).

The Proton acceptor role is filled by Glu316.

Belongs to the CobT family.

It catalyses the reaction 5,6-dimethylbenzimidazole + nicotinate beta-D-ribonucleotide = alpha-ribazole 5'-phosphate + nicotinate + H(+). Its pathway is nucleoside biosynthesis; alpha-ribazole biosynthesis; alpha-ribazole from 5,6-dimethylbenzimidazole: step 1/2. Catalyzes the synthesis of alpha-ribazole-5'-phosphate from nicotinate mononucleotide (NAMN) and 5,6-dimethylbenzimidazole (DMB). This is Nicotinate-nucleotide--dimethylbenzimidazole phosphoribosyltransferase from Xanthomonas campestris pv. campestris (strain B100).